Consider the following 352-residue polypeptide: Phosphate acyltransferase (352 aa).

Belongs to the PlsX family. Homodimer. Probably interacts with PlsY.

Its subcellular location is the cytoplasm. The enzyme catalyses a fatty acyl-[ACP] + phosphate = an acyl phosphate + holo-[ACP]. It functions in the pathway lipid metabolism; phospholipid metabolism. Catalyzes the reversible formation of acyl-phosphate (acyl-PO(4)) from acyl-[acyl-carrier-protein] (acyl-ACP). This enzyme utilizes acyl-ACP as fatty acyl donor, but not acyl-CoA. This chain is Phosphate acyltransferase, found in Bordetella bronchiseptica (strain ATCC BAA-588 / NCTC 13252 / RB50) (Alcaligenes bronchisepticus).